The following is a 724-amino-acid chain: uncharacterized protein (724 aa).

4 disordered regions span residues 97–131 (RKSF…YPSP), 187–252 (ETKI…FETE), 309–434 (FETE…TSKL), and 454–473 (RGVE…VAEK). Positions 115–128 (TRSASYSESNNSFY) are enriched in polar residues. Residues 187–217 (ETKIGIEEENEESEILAEEKEEEDNDFSVLE) adopt a coiled-coil conformation. Over residues 193–212 (EEENEESEILAEEKEEEDND) the composition is skewed to acidic residues. 2 stretches are compositionally biased toward basic and acidic residues: residues 223-252 (QEIK…FETE) and 309-322 (FETE…DHSE). Composition is skewed to low complexity over residues 323 to 333 (TTTSETDSTES) and 347 to 366 (SPQT…SLRS). Residues 367–388 (QPPPPPPSPEHKAPAPPPPPPM) are compositionally biased toward pro residues. The span at 400–410 (FSKTHSTNGDN) shows a compositional bias: polar residues. Coiled-coil stretches lie at residues 495-522 (SYFQ…HSFQ) and 649-678 (MELA…RAKR).

This is an uncharacterized protein from Arabidopsis thaliana (Mouse-ear cress).